The primary structure comprises 592 residues: Aspartate--tRNA(Asp/Asn) ligase (592 aa).

Glu172 serves as a coordination point for L-aspartate. The interval 196-199 (QLFK) is aspartate. Arg218 provides a ligand contact to L-aspartate. ATP-binding positions include 218 to 220 (RDE) and Gln227. Position 442 (His442) interacts with L-aspartate. Glu476 provides a ligand contact to ATP. An L-aspartate-binding site is contributed by Arg483. 528–531 (GWDR) serves as a coordination point for ATP. Residues 553 to 592 (SGTDPLTGAPTPITPEQRKEAGIDADPYAAAGRPPGRQSA) are disordered.

Belongs to the class-II aminoacyl-tRNA synthetase family. Type 1 subfamily. As to quaternary structure, homodimer.

It is found in the cytoplasm. It catalyses the reaction tRNA(Asx) + L-aspartate + ATP = L-aspartyl-tRNA(Asx) + AMP + diphosphate. Aspartyl-tRNA synthetase with relaxed tRNA specificity since it is able to aspartylate not only its cognate tRNA(Asp) but also tRNA(Asn). Reaction proceeds in two steps: L-aspartate is first activated by ATP to form Asp-AMP and then transferred to the acceptor end of tRNA(Asp/Asn). The polypeptide is Aspartate--tRNA(Asp/Asn) ligase (Acidothermus cellulolyticus (strain ATCC 43068 / DSM 8971 / 11B)).